Here is a 96-residue protein sequence, read N- to C-terminus: Large ribosomal subunit protein bL27 (96 aa).

Residues 1–10 (MLLKLNIQLF) constitute a propeptide that is removed on maturation.

Belongs to the bacterial ribosomal protein bL27 family. In terms of processing, the N-terminus is cleaved by ribosomal processing cysteine protease Prp.

This chain is Large ribosomal subunit protein bL27, found in Phytoplasma mali (strain AT).